Here is a 443-residue protein sequence, read N- to C-terminus: Ribulose bisphosphate carboxylase large chain (443 aa).

Residues N89 and T139 each coordinate substrate. The active-site Proton acceptor is the K141. K143 contacts substrate. The Mg(2+) site is built by K167, D169, and E170. K167 carries the post-translational modification N6-carboxylysine. H260 (proton acceptor) is an active-site residue. 3 residues coordinate substrate: R261, H293, and S345.

Belongs to the RuBisCO large chain family. Type I subfamily. As to quaternary structure, heterohexadecamer of 8 large chains and 8 small chains; disulfide-linked. The disulfide link is formed within the large subunit homodimers. Requires Mg(2+) as cofactor. The disulfide bond which can form in the large chain dimeric partners within the hexadecamer appears to be associated with oxidative stress and protein turnover.

The protein localises to the plastid. Its subcellular location is the chloroplast. The catalysed reaction is 2 (2R)-3-phosphoglycerate + 2 H(+) = D-ribulose 1,5-bisphosphate + CO2 + H2O. It carries out the reaction D-ribulose 1,5-bisphosphate + O2 = 2-phosphoglycolate + (2R)-3-phosphoglycerate + 2 H(+). Functionally, ruBisCO catalyzes two reactions: the carboxylation of D-ribulose 1,5-bisphosphate, the primary event in carbon dioxide fixation, as well as the oxidative fragmentation of the pentose substrate in the photorespiration process. Both reactions occur simultaneously and in competition at the same active site. The protein is Ribulose bisphosphate carboxylase large chain of Sesamum indicum (Oriental sesame).